We begin with the raw amino-acid sequence, 138 residues long: Rubber elongation factor protein (138 aa).

N-acetylalanine is present on Ala-2.

The protein belongs to the REF/SRPP family. As to quaternary structure, in solution, able to form amyloid fibers and aggregates rich in beta-sheets. Interaction with membrane stabilizes the protein, inhibiting the amyloid state and aggregation. Not glycosylated. As to expression, localized in all laticifer layers.

Its subcellular location is the cytoplasm. Its function is as follows. May be part of the rubber biosynthesis machinery. Plays a role in rubber elongation. The sequence is that of Rubber elongation factor protein from Hevea brasiliensis (Para rubber tree).